The sequence spans 128 residues: Phosphoribosyl-AMP cyclohydrolase (128 aa).

Residue Asp-77 participates in Mg(2+) binding. Cys-78 contributes to the Zn(2+) binding site. Mg(2+) contacts are provided by Asp-79 and Asp-81. Zn(2+) is bound by residues Cys-95 and Cys-102.

This sequence belongs to the PRA-CH family. As to quaternary structure, homodimer. Mg(2+) is required as a cofactor. The cofactor is Zn(2+).

It localises to the cytoplasm. The catalysed reaction is 1-(5-phospho-beta-D-ribosyl)-5'-AMP + H2O = 1-(5-phospho-beta-D-ribosyl)-5-[(5-phospho-beta-D-ribosylamino)methylideneamino]imidazole-4-carboxamide. It participates in amino-acid biosynthesis; L-histidine biosynthesis; L-histidine from 5-phospho-alpha-D-ribose 1-diphosphate: step 3/9. In terms of biological role, catalyzes the hydrolysis of the adenine ring of phosphoribosyl-AMP. This chain is Phosphoribosyl-AMP cyclohydrolase, found in Methylococcus capsulatus (strain ATCC 33009 / NCIMB 11132 / Bath).